We begin with the raw amino-acid sequence, 388 residues long: Ras-related protein Rab-26 (388 aa).

The tract at residues Met-1 to Gly-115 is disordered. Residues Gly-7 to Pro-21 are compositionally biased toward gly residues. The span at Arg-47 to Phe-56 shows a compositional bias: basic and acidic residues. The segment covering Pro-67–His-86 has biased composition (low complexity). Over residues Asn-87 to Ser-109 the composition is skewed to basic residues. Gly-197–Thr-204 is a binding site for GTP. The Effector region signature appears at Ser-219–Leu-228. GTP-binding positions include Asp-246–Gln-250 and Asn-304–Asp-307. Residue Cys-382 is the site of S-palmitoyl cysteine attachment. A Cysteine methyl ester modification is found at Cys-385. Cys-385 is lipidated: S-geranylgeranyl cysteine. A propeptide spans Arg-386–Met-388 (removed in mature form).

Belongs to the small GTPase superfamily. Rab family.

Its subcellular location is the cell membrane. Functionally, participates in exocrine secretion. This chain is Ras-related protein Rab-26, found in Drosophila melanogaster (Fruit fly).